The sequence spans 954 residues: Glycine dehydrogenase (decarboxylating) (954 aa).

Lys706 is subject to N6-(pyridoxal phosphate)lysine.

Belongs to the GcvP family. In terms of assembly, the glycine cleavage system is composed of four proteins: P, T, L and H. It depends on pyridoxal 5'-phosphate as a cofactor.

The catalysed reaction is N(6)-[(R)-lipoyl]-L-lysyl-[glycine-cleavage complex H protein] + glycine + H(+) = N(6)-[(R)-S(8)-aminomethyldihydrolipoyl]-L-lysyl-[glycine-cleavage complex H protein] + CO2. In terms of biological role, the glycine cleavage system catalyzes the degradation of glycine. The P protein binds the alpha-amino group of glycine through its pyridoxal phosphate cofactor; CO(2) is released and the remaining methylamine moiety is then transferred to the lipoamide cofactor of the H protein. The chain is Glycine dehydrogenase (decarboxylating) from Thermosynechococcus vestitus (strain NIES-2133 / IAM M-273 / BP-1).